The sequence spans 123 residues: Ribonuclease P protein component (123 aa).

The protein belongs to the RnpA family. In terms of assembly, consists of a catalytic RNA component (M1 or rnpB) and a protein subunit.

The catalysed reaction is Endonucleolytic cleavage of RNA, removing 5'-extranucleotides from tRNA precursor.. Its function is as follows. RNaseP catalyzes the removal of the 5'-leader sequence from pre-tRNA to produce the mature 5'-terminus. It can also cleave other RNA substrates such as 4.5S RNA. The protein component plays an auxiliary but essential role in vivo by binding to the 5'-leader sequence and broadening the substrate specificity of the ribozyme. This Streptomyces avermitilis (strain ATCC 31267 / DSM 46492 / JCM 5070 / NBRC 14893 / NCIMB 12804 / NRRL 8165 / MA-4680) protein is Ribonuclease P protein component.